The following is a 255-amino-acid chain: Large ribosomal subunit protein uL4 (255 aa).

It belongs to the universal ribosomal protein uL4 family. Part of the 50S ribosomal subunit.

Its function is as follows. One of the primary rRNA binding proteins, this protein initially binds near the 5'-end of the 23S rRNA. It is important during the early stages of 50S assembly. It makes multiple contacts with different domains of the 23S rRNA in the assembled 50S subunit and ribosome. Functionally, forms part of the polypeptide exit tunnel. This is Large ribosomal subunit protein uL4 from Thermoplasma acidophilum (strain ATCC 25905 / DSM 1728 / JCM 9062 / NBRC 15155 / AMRC-C165).